Here is a 162-residue protein sequence, read N- to C-terminus: Large ribosomal subunit protein uL10 (162 aa).

This sequence belongs to the universal ribosomal protein uL10 family. In terms of assembly, part of the ribosomal stalk of the 50S ribosomal subunit. The N-terminus interacts with L11 and the large rRNA to form the base of the stalk. The C-terminus forms an elongated spine to which L12 dimers bind in a sequential fashion forming a multimeric L10(L12)X complex.

In terms of biological role, forms part of the ribosomal stalk, playing a central role in the interaction of the ribosome with GTP-bound translation factors. The polypeptide is Large ribosomal subunit protein uL10 (Acholeplasma laidlawii (strain PG-8A)).